Reading from the N-terminus, the 474-residue chain is Vitamin D-binding protein (474 aa).

The first 16 residues, 1–16 (MKRVLVLLLAVAFGHA), serve as a signal peptide directing secretion. Albumin domains are found at residues 17-208 (LERG…QLKH), 209-394 (LSLL…LLKK), and 395-474 (ELSS…KNIL). Disulfide bonds link C29–C75, C74–C83, C96–C112, C111–C122, C145–C190, C189–C198, C220–C266, C265–C273, C286–C300, C299–C311, C335–C376, C375–C384, C407–C453, and C452–C462.

Belongs to the ALB/AFP/VDB family. Associates with membrane-bound immunoglobulin on the surface of B-lymphocytes and with IgG Fc receptor on the membranes of T-lymphocytes. Interacts with LRP2; the interaction is required for renal uptake of GC in complex with 25-hydroxyvitamin D3. Post-translationally, allele GC*1S is O-glycosylated at Thr-436. The trisaccharide sugar moiety can be modified by the successive removal of neuraminic acid and galactose leaving an O-mceeN-acetyl-galactosamine. This conversion is thought to produce a macrophage-activating factor (Gc-MAF). Only a minor proportion of plasma GC is O-glycosylated. The potential N-glycosylation site predicted at Asn-288 is thought to be nonglycosylated. Expressed in the liver. Found in plasma, ascites, cerebrospinal fluid and urine.

Its subcellular location is the secreted. In terms of biological role, involved in vitamin D transport and storage, scavenging of extracellular G-actin, enhancement of the chemotactic activity of C5 alpha for neutrophils in inflammation and macrophage activation. In Homo sapiens (Human), this protein is Vitamin D-binding protein (GC).